Here is a 101-residue protein sequence, read N- to C-terminus: Small ribosomal subunit protein uS14 (101 aa).

Belongs to the universal ribosomal protein uS14 family. In terms of assembly, part of the 30S ribosomal subunit. Contacts proteins S3 and S10.

Binds 16S rRNA, required for the assembly of 30S particles and may also be responsible for determining the conformation of the 16S rRNA at the A site. In Leptothrix cholodnii (strain ATCC 51168 / LMG 8142 / SP-6) (Leptothrix discophora (strain SP-6)), this protein is Small ribosomal subunit protein uS14.